The chain runs to 396 residues: Elongation factor Tu (396 aa).

One can recognise a tr-type G domain in the interval 10-206 (KPHCNIGTIG…NVDEYIPQPE (197 aa)). The G1 stretch occupies residues 19 to 26 (GHVDHGKT). Residue 19 to 26 (GHVDHGKT) coordinates GTP. Thr-26 is a binding site for Mg(2+). Residues 60–64 (GITIS) are G2. Residues 81-84 (DCPG) are G3. Residues 81 to 85 (DCPGH) and 136 to 139 (NKCD) contribute to the GTP site. A G4 region spans residues 136–139 (NKCD). The interval 174-176 (SAL) is G5.

This sequence belongs to the TRAFAC class translation factor GTPase superfamily. Classic translation factor GTPase family. EF-Tu/EF-1A subfamily. As to quaternary structure, monomer.

Its subcellular location is the cytoplasm. The enzyme catalyses GTP + H2O = GDP + phosphate + H(+). GTP hydrolase that promotes the GTP-dependent binding of aminoacyl-tRNA to the A-site of ribosomes during protein biosynthesis. The protein is Elongation factor Tu of Bradyrhizobium sp. (strain BTAi1 / ATCC BAA-1182).